Reading from the N-terminus, the 111-residue chain is Disintegrin acostatin-alpha (111 aa).

The N-terminal stretch at 1–20 (MIQVLLVTLCLAVFPYQGSS) is a signal peptide. Residues 21-46 (IILESGNVNDYEVVYPRKVTALPKGA) constitute a propeptide that is removed on maturation. The Disintegrin domain maps to 47-111 (IQPKNPCCDA…GDCPRKHFYA (65 aa)). Gln-48 is subject to Pyrrolidone carboxylic acid; in Disintegrin acostatin-alpha, processed form. 4 disulfide bridges follow: Cys-53-Cys-76, Cys-67-Cys-73, Cys-72-Cys-97, and Cys-85-Cys-104. A Cell attachment site motif is present at residues 89-91 (RGD). A propeptide spanning residues 110-111 (YA) is cleaved from the precursor.

Belongs to the disintegrin family. Dimeric disintegrin subfamily. In terms of assembly, heterodimer with subunit beta; disulfide-linked. Expressed by the venom gland.

It is found in the secreted. In terms of biological role, inhibits fibrinogen interaction with platelets. Acts by binding to alpha-IIb/beta-3 (ITGA2B/ITGB3) on the platelet surface and inhibits ADP-induced platelet aggregation in human platelet-rich plasma. The chain is Disintegrin acostatin-alpha from Agkistrodon contortrix contortrix (Southern copperhead).